The primary structure comprises 344 residues: Anthranilate phosphoribosyltransferase (344 aa).

5-phospho-alpha-D-ribose 1-diphosphate is bound by residues G80, 83–84, T88, 90–93, 108–116, and S120; these read GD, NVST, and KHGNRSVSS. Residue G80 coordinates anthranilate. S92 is a Mg(2+) binding site. N111 is a binding site for anthranilate. Position 166 (R166) interacts with anthranilate. D225 and E226 together coordinate Mg(2+).

It belongs to the anthranilate phosphoribosyltransferase family. In terms of assembly, homodimer. It depends on Mg(2+) as a cofactor.

It catalyses the reaction N-(5-phospho-beta-D-ribosyl)anthranilate + diphosphate = 5-phospho-alpha-D-ribose 1-diphosphate + anthranilate. The protein operates within amino-acid biosynthesis; L-tryptophan biosynthesis; L-tryptophan from chorismate: step 2/5. In terms of biological role, catalyzes the transfer of the phosphoribosyl group of 5-phosphorylribose-1-pyrophosphate (PRPP) to anthranilate to yield N-(5'-phosphoribosyl)-anthranilate (PRA). The chain is Anthranilate phosphoribosyltransferase from Legionella pneumophila (strain Paris).